The following is a 445-amino-acid chain: tRNA modification GTPase MnmE (445 aa).

The (6S)-5-formyl-5,6,7,8-tetrahydrofolate site is built by R20, E79, and K119. The TrmE-type G domain occupies 215–371 (GLKLAIIGPP…ILKNIENIAE (157 aa)). N225 is a binding site for K(+). GTP contacts are provided by residues 225-230 (NTGKSS), 244-250 (SNIAGTT), and 269-272 (DTAG). S229 is a Mg(2+) binding site. K(+) is bound by residues S244, I246, and T249. T250 contacts Mg(2+). K445 is a (6S)-5-formyl-5,6,7,8-tetrahydrofolate binding site.

The protein belongs to the TRAFAC class TrmE-Era-EngA-EngB-Septin-like GTPase superfamily. TrmE GTPase family. In terms of assembly, homodimer. Heterotetramer of two MnmE and two MnmG subunits. Requires K(+) as cofactor.

The protein localises to the cytoplasm. Exhibits a very high intrinsic GTPase hydrolysis rate. Involved in the addition of a carboxymethylaminomethyl (cmnm) group at the wobble position (U34) of certain tRNAs, forming tRNA-cmnm(5)s(2)U34. This chain is tRNA modification GTPase MnmE, found in Rickettsia typhi (strain ATCC VR-144 / Wilmington).